Here is a 326-residue protein sequence, read N- to C-terminus: ATP-dependent 6-phosphofructokinase 2 (326 aa).

Residue Gly-14 coordinates ATP. Position 24–28 (24–28 (RAVTR)) interacts with ADP. ATP-binding positions include 75–76 (RC) and 105–108 (GDGS). Residue Asp-106 participates in Mg(2+) binding. 129 to 131 (TID) provides a ligand contact to substrate. The Proton acceptor role is filled by Asp-131. Position 158 (Arg-158) interacts with ADP. Residues Arg-166 and 173 to 175 (MGR) contribute to the substrate site. ADP-binding positions include 189 to 191 (GAE), Lys-215, and 217 to 219 (KNS). Substrate-binding positions include Glu-226, Arg-250, and 256–259 (HLQR).

This sequence belongs to the phosphofructokinase type A (PFKA) family. ATP-dependent PFK group I subfamily. Prokaryotic clade 'B1' sub-subfamily. As to quaternary structure, homotetramer. It depends on Mg(2+) as a cofactor.

The protein resides in the cytoplasm. The catalysed reaction is beta-D-fructose 6-phosphate + ATP = beta-D-fructose 1,6-bisphosphate + ADP + H(+). It participates in carbohydrate degradation; glycolysis; D-glyceraldehyde 3-phosphate and glycerone phosphate from D-glucose: step 3/4. Its activity is regulated as follows. Allosterically activated by ADP and other diphosphonucleosides, and allosterically inhibited by phosphoenolpyruvate. In terms of biological role, catalyzes the phosphorylation of D-fructose 6-phosphate to fructose 1,6-bisphosphate by ATP, the first committing step of glycolysis. This chain is ATP-dependent 6-phosphofructokinase 2, found in Bacteroides thetaiotaomicron (strain ATCC 29148 / DSM 2079 / JCM 5827 / CCUG 10774 / NCTC 10582 / VPI-5482 / E50).